The chain runs to 356 residues: Putative mitogen-activated protein kinase 14C (356 aa).

Residues 20 to 305 (YEFVRFLGGG…AAEAMLHPYL (286 aa)) enclose the Protein kinase domain. Residues 26-34 (LGGGSFGQV) and lysine 49 contribute to the ATP site. Aspartate 147 acts as the Proton acceptor in catalysis. A Phosphothreonine modification is found at threonine 177.

This sequence belongs to the protein kinase superfamily. CMGC Ser/Thr protein kinase family. MAP kinase subfamily. The cofactor is Mg(2+). Post-translationally, the phosphorylation on Thr-177 activates the enzyme. A conserved Tyr, which must also be phosphorylated to activate the enzyme in closely related sequences, is replaced by His-179 in this sequence.

The enzyme catalyses L-seryl-[protein] + ATP = O-phospho-L-seryl-[protein] + ADP + H(+). The catalysed reaction is L-threonyl-[protein] + ATP = O-phospho-L-threonyl-[protein] + ADP + H(+). In terms of biological role, kinase involved in a signal transduction pathway. In Drosophila melanogaster (Fruit fly), this protein is Putative mitogen-activated protein kinase 14C (p38c).